Reading from the N-terminus, the 346-residue chain is MASVGIIGATGYVGTEIVRLLQNHPDINITSVVSHNFAGQKISDIYPNLKNVFEMECDELDIDKIADKAEVFVTALPHGISKEVIPKLVEKGKRIVDHSGDFRYKSVEVYEKWYNATHGMPHLLKLSAYGLPELHREEIKNAQIIGNPGCYPTCSILALAPLVKNRLVDTKNIIIDAASGVSGAGRKTDLPYQFCECDENFKAYSVSNHRHTSEIEQELSLLAEEEITVSFTPHLVPMKRGMLATIYANLNCEKSTSELIELYKEYYKNEYFVRILDEGKLPETKFVAGSNFIDIGLVVDKRLNRVVILSAIDNLGKGAAGQAVQVLNILFGLPEHRGLTNPGFYL.

Residue cysteine 150 is part of the active site.

It belongs to the NAGSA dehydrogenase family. Type 1 subfamily.

The protein localises to the cytoplasm. It catalyses the reaction N-acetyl-L-glutamate 5-semialdehyde + phosphate + NADP(+) = N-acetyl-L-glutamyl 5-phosphate + NADPH + H(+). It functions in the pathway amino-acid biosynthesis; L-arginine biosynthesis; N(2)-acetyl-L-ornithine from L-glutamate: step 3/4. In terms of biological role, catalyzes the NADPH-dependent reduction of N-acetyl-5-glutamyl phosphate to yield N-acetyl-L-glutamate 5-semialdehyde. The sequence is that of N-acetyl-gamma-glutamyl-phosphate reductase from Acetivibrio thermocellus (strain ATCC 27405 / DSM 1237 / JCM 9322 / NBRC 103400 / NCIMB 10682 / NRRL B-4536 / VPI 7372) (Clostridium thermocellum).